The chain runs to 337 residues: Eukaryotic translation initiation factor 3 subunit H (337 aa).

Residues 21–153 (VQCDGLAVMK…LKAYRLTPQA (133 aa)) form the MPN domain.

Belongs to the eIF-3 subunit H family. As to quaternary structure, component of the eukaryotic translation initiation factor 3 (eIF-3) complex. The eIF-3 complex interacts with pix. Interacts with mxt.

The protein resides in the cytoplasm. In terms of biological role, component of the eukaryotic translation initiation factor 3 (eIF-3) complex, which is involved in protein synthesis of a specialized repertoire of mRNAs and, together with other initiation factors, stimulates binding of mRNA and methionyl-tRNAi to the 40S ribosome. The eIF-3 complex specifically targets and initiates translation of a subset of mRNAs involved in cell proliferation. The polypeptide is Eukaryotic translation initiation factor 3 subunit H (Drosophila willistoni (Fruit fly)).